The sequence spans 92 residues: 11 kDa excretory-secretory protein (92 aa).

The polypeptide is 11 kDa excretory-secretory protein (Trichostrongylus colubriformis (Black scour worm)).